Reading from the N-terminus, the 413-residue chain is Serine hydroxymethyltransferase (413 aa).

(6S)-5,6,7,8-tetrahydrofolate is bound by residues L117 and 121-123 (GHL). K226 is modified (N6-(pyridoxal phosphate)lysine). (6S)-5,6,7,8-tetrahydrofolate contacts are provided by residues E239 and 349 to 351 (SPF).

It belongs to the SHMT family. In terms of assembly, homodimer. The cofactor is pyridoxal 5'-phosphate.

It is found in the cytoplasm. It catalyses the reaction (6R)-5,10-methylene-5,6,7,8-tetrahydrofolate + glycine + H2O = (6S)-5,6,7,8-tetrahydrofolate + L-serine. Its pathway is one-carbon metabolism; tetrahydrofolate interconversion. The protein operates within amino-acid biosynthesis; glycine biosynthesis; glycine from L-serine: step 1/1. Functionally, catalyzes the reversible interconversion of serine and glycine with tetrahydrofolate (THF) serving as the one-carbon carrier. This reaction serves as the major source of one-carbon groups required for the biosynthesis of purines, thymidylate, methionine, and other important biomolecules. Also exhibits THF-independent aldolase activity toward beta-hydroxyamino acids, producing glycine and aldehydes, via a retro-aldol mechanism. The protein is Serine hydroxymethyltransferase of Bacillus cytotoxicus (strain DSM 22905 / CIP 110041 / 391-98 / NVH 391-98).